Consider the following 422-residue polypeptide: Protein TEX1 (422 aa).

5 WD repeats span residues 61-100 (ITPN…FDKS), 158-197 (GSKT…SSVC), 207-246 (EDND…LEVC), 251-290 (AHTG…CELI), and 293-332 (DLNS…LLHS). The segment at 388-422 (KRRKNNGGGNNHNKRTSKNTDRIGKDRPSRFNSKK) is disordered. The span at 405–416 (KNTDRIGKDRPS) shows a compositional bias: basic and acidic residues.

This sequence belongs to the THOC3 family. In terms of assembly, component of the transcription/export (TREX) complex and the THO complex.

It localises to the nucleus. Component of the TREX complex, which operates in coupling transcription elongation to mRNA export. The protein is Protein TEX1 (TEX1) of Saccharomyces cerevisiae (strain ATCC 204508 / S288c) (Baker's yeast).